We begin with the raw amino-acid sequence, 239 residues long: Tetratricopeptide repeat protein 9B (239 aa).

2 disordered regions span residues 1–57 (MQRG…LGAA) and 99–126 (QGARPSGLPAPAPGPTSSPGPARLSEEQ). Ser-7 and Ser-27 each carry phosphoserine. Residues 16 to 31 (PEPPPRPPPALSPPGS) are compositionally biased toward pro residues. The TPR 1 repeat unit spans residues 65 to 99 (AVAFKAEGQRCYREKKFREAIGKYHRALLQLKAAQ). The span at 106–116 (LPAPAPGPTSS) shows a compositional bias: pro residues. The TPR 2 repeat unit spans residues 171 to 204 (FKATYRAGIAFYHLGDYARALRYLQEARSREPTD).

It belongs to the TTC9 family.

This chain is Tetratricopeptide repeat protein 9B (TTC9B), found in Homo sapiens (Human).